The chain runs to 269 residues: Regulating synaptic membrane exocytosis protein 4 (269 aa).

The C2 domain maps to 115–233; sequence PMGDVEIGLQ…DLTTLAVGWY (119 aa). Phosphoserine occurs at positions 254 and 257.

Binds PPFIA3. Does not bind RAB3.

The protein localises to the synapse. Its function is as follows. Regulates synaptic membrane exocytosis. This is Regulating synaptic membrane exocytosis protein 4 (RIMS4) from Homo sapiens (Human).